Consider the following 349-residue polypeptide: Soluble TNF receptor II (349 aa).

The N-terminal stretch at 1–19 (MRSVLYSYILFLSCIIING) is a signal peptide. TNFR-Cys repeat units lie at residues 31–65 (KCKD…NTQC) and 67–108 (PCGS…NRIC). 6 disulfide bridges follow: Cys-32-Cys-43, Cys-44-Cys-57, Cys-47-Cys-65, Cys-68-Cys-83, Cys-86-Cys-100, and Cys-90-Cys-108. Asn-101, Asn-190, Asn-249, Asn-277, and Asn-313 each carry an N-linked (GlcNAc...) asparagine; by host glycan.

It belongs to the orthopoxvirus OPG002 family.

It is found in the secreted. Inhibits host immune defense by binding to host TNF and various chemokines in the extracellular space. Binds host CC chemokines (beta chemokines) and CXC chemokines (alpha chemokines). The chain is Soluble TNF receptor II (OPG002) from Monkeypox virus.